We begin with the raw amino-acid sequence, 142 residues long: Large ribosomal subunit protein uL13 (142 aa).

The protein belongs to the universal ribosomal protein uL13 family. As to quaternary structure, part of the 50S ribosomal subunit.

This protein is one of the early assembly proteins of the 50S ribosomal subunit, although it is not seen to bind rRNA by itself. It is important during the early stages of 50S assembly. The protein is Large ribosomal subunit protein uL13 of Buchnera aphidicola subsp. Acyrthosiphon pisum (strain 5A).